A 248-amino-acid chain; its full sequence is ATP synthase subunit a (248 aa).

Transmembrane regions (helical) follow at residues 31–51 (GQVL…VLLG), 90–110 (VPYV…GNLF), 129–149 (INTT…AGIS), 195–215 (VIAV…MILF), and 216–236 (LFTG…YIGE).

Belongs to the ATPase A chain family. As to quaternary structure, F-type ATPases have 2 components, CF(1) - the catalytic core - and CF(0) - the membrane proton channel. CF(1) has five subunits: alpha(3), beta(3), gamma(1), delta(1), epsilon(1). CF(0) has four main subunits: a, b, b' and c.

The protein localises to the cellular thylakoid membrane. Its function is as follows. Key component of the proton channel; it plays a direct role in the translocation of protons across the membrane. This is ATP synthase subunit a from Synechococcus sp. (strain JA-3-3Ab) (Cyanobacteria bacterium Yellowstone A-Prime).